Consider the following 117-residue polypeptide: Large ribosomal subunit protein bL20 (117 aa).

It belongs to the bacterial ribosomal protein bL20 family.

Its function is as follows. Binds directly to 23S ribosomal RNA and is necessary for the in vitro assembly process of the 50S ribosomal subunit. It is not involved in the protein synthesizing functions of that subunit. This chain is Large ribosomal subunit protein bL20, found in Nitratidesulfovibrio vulgaris (strain DP4) (Desulfovibrio vulgaris).